We begin with the raw amino-acid sequence, 1076 residues long: Envelopment polyprotein (1076 aa).

The signal sequence occupies residues 1-18 (MIVPIVLFLTLCPSELSA). Topologically, residues 19–455 (WGSPGDPIVC…NPQCYPVKKW (437 aa)) are lumenal. 9 cysteine pairs are disulfide-bonded: Cys-28–Cys-51, Cys-145–Cys-158, Cys-182–Cys-329, Cys-208–Cys-218, Cys-260–Cys-307, Cys-289–Cys-294, Cys-351–Cys-354, Cys-358–Cys-426, and Cys-378–Cys-383. The helical transmembrane segment at 456–476 (LFLVVVIMCCYCALMLLTNIL) threads the bilayer. Residues 477 to 523 (RAIGVWGTWVFAPIKLALALGLRLAKLSKKGLVAVVTRGQMIVNDEL) are golgi retention signal. Over 477-539 (RAIGVWGTWV…RGEQNEGRQG (63 aa)) the chain is Cytoplasmic. The segment at 544 to 566 (GPIRHWLYSPALILILTTSICSG) is internal signal sequence for glycoprotein C. Cystine bridges form between Cys-567–Cys-608, Cys-580–Cys-590, Cys-633–Cys-729, Cys-648–Cys-845, Cys-654–Cys-702, Cys-660–Cys-709, Cys-664–Cys-691, Cys-695–Cys-700, Cys-782–Cys-797, and Cys-813–Cys-827. Over 567–1040 (CDELVHAESK…ALFGDGITRW (474 aa)) the chain is Lumenal. Residues 654–660 (CRWAGDC) are fusion loop. A fusion loop region spans residues 695–709 (CGGAACGCFNAAPSC). Asn-857 and Asn-918 each carry an N-linked (GlcNAc...) asparagine; by host glycan. 2 cysteine pairs are disulfide-bonded: Cys-912-Cys-982 and Cys-922-Cys-925. An N-linked (GlcNAc...) asparagine; by host glycan is attached at Asn-940. The chain crosses the membrane as a helical span at residues 1041-1061 (ILGIIGVLLACVMLFVVVVAI). Residues 1062 to 1076 (TRRLIKGLTQRAKVA) are Cytoplasmic-facing.

This sequence belongs to the phlebovirus envelope glycoprotein family. Heterodimer with glycoprotein C. As to quaternary structure, heterodimer with glycoprotein N. Homotrimer (postfusion). Specific enzymatic cleavages in vivo yield mature proteins Glycoprotein C, and Glycoprotein N. In terms of processing, glycosylated. Post-translationally, palmitoylated.

It is found in the virion membrane. It localises to the host Golgi apparatus membrane. The protein resides in the host endoplasmic reticulum membrane. Structural component of the virion that interacts with glycoprotein C. It shields the hydrophobic fusion loops of the glycoprotein C, preventing premature fusion. The glycoprotein protrusions are arranged on an icosahedral lattice, with T=12 triangulation. They are able to attach the virion to the host cell receptor CD209/DC-SIGN and to promote fusion of membranes with the late endosome after endocytosis of the virion. Plays a role in the packaging of ribonucleoproteins during virus assembly. Its function is as follows. Structural component of the virion that interacts with glycoprotein N. Acts as a class II fusion protein that is activated upon acidification and subsequent repositioning of the glycoprotein N. The glycoprotein protrusions are arranged on an icosahedral lattice, with T=12 triangulation. They are able to attach the virion to the host cell receptor CD209/DC-SIGN and to promote fusion of membranes with the late endosome after endocytosis of the virion. The protein is Envelopment polyprotein (GP) of Alces americanus (American moose).